The chain runs to 337 residues: Probable uridine nucleosidase 2 (337 aa).

His260 is an active-site residue.

It belongs to the IUNH family.

Its subcellular location is the cytoplasm. It catalyses the reaction uridine + H2O = D-ribose + uracil. Involved in pyrimidine breakdown. The polypeptide is Probable uridine nucleosidase 2 (URH2) (Oryza sativa subsp. japonica (Rice)).